We begin with the raw amino-acid sequence, 426 residues long: Isovaleryl-CoA dehydrogenase, mitochondrial (426 aa).

A mitochondrion-targeting transit peptide spans 1-32; that stretch reads MATAAWLLGRRVASWRMRPPLQSLAGLITQRT. An N6-acetyllysine; alternate mark is found at Lys58 and Lys78. N6-succinyllysine; alternate occurs at positions 58 and 78. FAD contacts are provided by residues 165–174 and 198–200; these read LAMSEPNAGS and WIT. Ser174 lines the substrate pocket. 222-223 is a binding site for substrate; the sequence is SR. Residue Lys241 is modified to N6-acetyllysine. Substrate contacts are provided by residues Tyr277 and 284 to 287; that span reads DLER. Catalysis depends on Glu286, which acts as the Proton acceptor. Arg312 is a binding site for FAD. Lys318 is modified (N6-succinyllysine). FAD is bound by residues Gln323 and 380–384; that span reads QCLGG. 407–408 provides a ligand contact to substrate; sequence AG. 409–411 contributes to the FAD binding site; sequence TSE.

The protein belongs to the acyl-CoA dehydrogenase family. As to quaternary structure, homotetramer. The cofactor is FAD.

The protein localises to the mitochondrion matrix. It carries out the reaction 3-methylbutanoyl-CoA + oxidized [electron-transfer flavoprotein] + H(+) = 3-methylbut-2-enoyl-CoA + reduced [electron-transfer flavoprotein]. The enzyme catalyses pentanoyl-CoA + oxidized [electron-transfer flavoprotein] + H(+) = (2E)-pentenoyl-CoA + reduced [electron-transfer flavoprotein]. It catalyses the reaction hexanoyl-CoA + oxidized [electron-transfer flavoprotein] + H(+) = (2E)-hexenoyl-CoA + reduced [electron-transfer flavoprotein]. The catalysed reaction is butanoyl-CoA + oxidized [electron-transfer flavoprotein] + H(+) = (2E)-butenoyl-CoA + reduced [electron-transfer flavoprotein]. It functions in the pathway amino-acid degradation; L-leucine degradation; (S)-3-hydroxy-3-methylglutaryl-CoA from 3-isovaleryl-CoA: step 1/3. Its function is as follows. Catalyzes the conversion of isovaleryl-CoA/3-methylbutanoyl-CoA to 3-methylbut-2-enoyl-CoA as an intermediate step in the leucine (Leu) catabolic pathway. To a lesser extent, is also able to catalyze the oxidation of other saturated short-chain acyl-CoA thioesters as pentanoyl-CoA, hexenoyl-CoA and butenoyl-CoA. The protein is Isovaleryl-CoA dehydrogenase, mitochondrial (IVD) of Bos taurus (Bovine).